The sequence spans 268 residues: Pantothenate synthetase (268 aa).

Residue 18-25 participates in ATP binding; sequence MGYLHEGH. H25 serves as the catalytic Proton donor. Q49 is a (R)-pantoate binding site. Q49 provides a ligand contact to beta-alanine. ATP is bound at residue 135-138; sequence GQKD. Q141 lines the (R)-pantoate pocket. ATP-binding positions include I164 and 172–175; that span reads LSSR.

Belongs to the pantothenate synthetase family. As to quaternary structure, homodimer.

Its subcellular location is the cytoplasm. The enzyme catalyses (R)-pantoate + beta-alanine + ATP = (R)-pantothenate + AMP + diphosphate + H(+). The protein operates within cofactor biosynthesis; (R)-pantothenate biosynthesis; (R)-pantothenate from (R)-pantoate and beta-alanine: step 1/1. In terms of biological role, catalyzes the condensation of pantoate with beta-alanine in an ATP-dependent reaction via a pantoyl-adenylate intermediate. The polypeptide is Pantothenate synthetase (Dehalococcoides mccartyi (strain CBDB1)).